A 497-amino-acid chain; its full sequence is Proline--tRNA ligase (497 aa).

This sequence belongs to the class-II aminoacyl-tRNA synthetase family. ProS type 3 subfamily. Homodimer.

It localises to the cytoplasm. The enzyme catalyses tRNA(Pro) + L-proline + ATP = L-prolyl-tRNA(Pro) + AMP + diphosphate. Its function is as follows. Catalyzes the attachment of proline to tRNA(Pro) in a two-step reaction: proline is first activated by ATP to form Pro-AMP and then transferred to the acceptor end of tRNA(Pro). The polypeptide is Proline--tRNA ligase (Bacteroides fragilis (strain ATCC 25285 / DSM 2151 / CCUG 4856 / JCM 11019 / LMG 10263 / NCTC 9343 / Onslow / VPI 2553 / EN-2)).